The sequence spans 209 residues: Uridine kinase (209 aa).

12–19 (GGSGSGKT) provides a ligand contact to ATP.

It belongs to the uridine kinase family.

Its subcellular location is the cytoplasm. The enzyme catalyses uridine + ATP = UMP + ADP + H(+). The catalysed reaction is cytidine + ATP = CMP + ADP + H(+). The protein operates within pyrimidine metabolism; CTP biosynthesis via salvage pathway; CTP from cytidine: step 1/3. It functions in the pathway pyrimidine metabolism; UMP biosynthesis via salvage pathway; UMP from uridine: step 1/1. This Listeria monocytogenes serotype 4b (strain CLIP80459) protein is Uridine kinase.